The chain runs to 336 residues: Holliday junction branch migration complex subunit RuvB (336 aa).

The large ATPase domain (RuvB-L) stretch occupies residues 4-185 (ADRLISADIQ…FGIVQRLEFY (182 aa)). ATP-binding positions include Ile-24, Arg-25, Gly-66, Lys-69, Thr-70, Thr-71, 132 to 134 (EDY), Arg-175, Tyr-185, and Arg-222. Thr-70 contacts Mg(2+). Residues 186-256 (NVDDLQHIVA…IASKALDMLN (71 aa)) are small ATPAse domain (RuvB-S). Residues 259–336 (AAGFDYLDRK…RHFNRIMEAP (78 aa)) are head domain (RuvB-H). DNA-binding residues include Arg-295, Arg-314, and Arg-319.

It belongs to the RuvB family. Homohexamer. Forms an RuvA(8)-RuvB(12)-Holliday junction (HJ) complex. HJ DNA is sandwiched between 2 RuvA tetramers; dsDNA enters through RuvA and exits via RuvB. An RuvB hexamer assembles on each DNA strand where it exits the tetramer. Each RuvB hexamer is contacted by two RuvA subunits (via domain III) on 2 adjacent RuvB subunits; this complex drives branch migration. In the full resolvosome a probable DNA-RuvA(4)-RuvB(12)-RuvC(2) complex forms which resolves the HJ.

Its subcellular location is the cytoplasm. It catalyses the reaction ATP + H2O = ADP + phosphate + H(+). The RuvA-RuvB-RuvC complex processes Holliday junction (HJ) DNA during genetic recombination and DNA repair, while the RuvA-RuvB complex plays an important role in the rescue of blocked DNA replication forks via replication fork reversal (RFR). RuvA specifically binds to HJ cruciform DNA, conferring on it an open structure. The RuvB hexamer acts as an ATP-dependent pump, pulling dsDNA into and through the RuvAB complex. RuvB forms 2 homohexamers on either side of HJ DNA bound by 1 or 2 RuvA tetramers; 4 subunits per hexamer contact DNA at a time. Coordinated motions by a converter formed by DNA-disengaged RuvB subunits stimulates ATP hydrolysis and nucleotide exchange. Immobilization of the converter enables RuvB to convert the ATP-contained energy into a lever motion, pulling 2 nucleotides of DNA out of the RuvA tetramer per ATP hydrolyzed, thus driving DNA branch migration. The RuvB motors rotate together with the DNA substrate, which together with the progressing nucleotide cycle form the mechanistic basis for DNA recombination by continuous HJ branch migration. Branch migration allows RuvC to scan DNA until it finds its consensus sequence, where it cleaves and resolves cruciform DNA. The protein is Holliday junction branch migration complex subunit RuvB of Proteus mirabilis (strain HI4320).